Reading from the N-terminus, the 90-residue chain is Small ribosomal subunit protein bS20 (90 aa).

Residues 1–15 (MANHKSAQKRIRQTK) are compositionally biased toward basic residues. A disordered region spans residues 1–22 (MANHKSAQKRIRQTKTRTERNR).

It belongs to the bacterial ribosomal protein bS20 family.

In terms of biological role, binds directly to 16S ribosomal RNA. This Helicobacter hepaticus (strain ATCC 51449 / 3B1) protein is Small ribosomal subunit protein bS20.